The following is a 274-amino-acid chain: Exosome complex component Rrp42 (274 aa).

The protein belongs to the RNase PH family. Rrp42 subfamily. In terms of assembly, component of the archaeal exosome complex. Forms a hexameric ring-like arrangement composed of 3 Rrp41-Rrp42 heterodimers. The hexameric ring associates with a trimer of Rrp4 and/or Csl4 subunits.

The protein resides in the cytoplasm. In terms of biological role, non-catalytic component of the exosome, which is a complex involved in RNA degradation. Contributes to the structuring of the Rrp41 active site. This is Exosome complex component Rrp42 from Pyrococcus horikoshii (strain ATCC 700860 / DSM 12428 / JCM 9974 / NBRC 100139 / OT-3).